Here is a 286-residue protein sequence, read N- to C-terminus: 33 kDa chaperonin (286 aa).

Cystine bridges form between Cys225-Cys227 and Cys258-Cys261.

Belongs to the HSP33 family. In terms of processing, under oxidizing conditions two disulfide bonds are formed involving the reactive cysteines. Under reducing conditions zinc is bound to the reactive cysteines and the protein is inactive.

It is found in the cytoplasm. Functionally, redox regulated molecular chaperone. Protects both thermally unfolding and oxidatively damaged proteins from irreversible aggregation. Plays an important role in the bacterial defense system toward oxidative stress. In Shewanella sp. (strain ANA-3), this protein is 33 kDa chaperonin.